The following is a 339-amino-acid chain: Ketol-acid reductoisomerase (NADP(+)) (339 aa).

The 182-residue stretch at 1 to 182 folds into the KARI N-terminal Rossmann domain; that stretch reads MRVYYDRDAD…GGGRSGVIET (182 aa). Residues 24–27, Arg48, Ser51, Thr53, and 83–86 contribute to the NADP(+) site; these read YGSQ and DEHQ. The active site involves His108. Gly134 is an NADP(+) binding site. Residues 183-328 enclose the KARI C-terminal knotted domain; the sequence is TFKEECETDL…AELRAMMPWI (146 aa). 4 residues coordinate Mg(2+): Asp191, Glu195, Glu227, and Glu231. Ser252 is a binding site for substrate.

The protein belongs to the ketol-acid reductoisomerase family. Requires Mg(2+) as cofactor.

The enzyme catalyses (2R)-2,3-dihydroxy-3-methylbutanoate + NADP(+) = (2S)-2-acetolactate + NADPH + H(+). It carries out the reaction (2R,3R)-2,3-dihydroxy-3-methylpentanoate + NADP(+) = (S)-2-ethyl-2-hydroxy-3-oxobutanoate + NADPH + H(+). Its pathway is amino-acid biosynthesis; L-isoleucine biosynthesis; L-isoleucine from 2-oxobutanoate: step 2/4. It functions in the pathway amino-acid biosynthesis; L-valine biosynthesis; L-valine from pyruvate: step 2/4. Functionally, involved in the biosynthesis of branched-chain amino acids (BCAA). Catalyzes an alkyl-migration followed by a ketol-acid reduction of (S)-2-acetolactate (S2AL) to yield (R)-2,3-dihydroxy-isovalerate. In the isomerase reaction, S2AL is rearranged via a Mg-dependent methyl migration to produce 3-hydroxy-3-methyl-2-ketobutyrate (HMKB). In the reductase reaction, this 2-ketoacid undergoes a metal-dependent reduction by NADPH to yield (R)-2,3-dihydroxy-isovalerate. This is Ketol-acid reductoisomerase (NADP(+)) from Rhizorhabdus wittichii (strain DSM 6014 / CCUG 31198 / JCM 15750 / NBRC 105917 / EY 4224 / RW1) (Sphingomonas wittichii).